The primary structure comprises 110 residues: MEVKIFTLLQIALFIALGIHLVVAGPETKEDKKSDVYELFTVEYCGTNCTLLTNGRWTACTGKKGTCRCYHESGEKVGLCLSTEYTDFSEYPNPKSSEIDAAAPLPRETH.

Residues 1-24 (MEVKIFTLLQIALFIALGIHLVVA) form the signal peptide. Intrachain disulfides connect Cys-45/Cys-67, Cys-49/Cys-69, and Cys-60/Cys-80. An N-linked (GlcNAc...) asparagine glycan is attached at Asn-48. Positions 89 to 110 (SEYPNPKSSEIDAAAPLPRETH) are disordered.

The protein resides in the secreted. Functionally, salivary chemokine-binding protein which binds to host chemokines CXCL1, CXCL2 and CXCL8. The sequence is that of Evasin P1166 from Ixodes ricinus (Common tick).